We begin with the raw amino-acid sequence, 79 residues long: Neurotoxin BmK-M9 (79 aa).

The N-terminal stretch at 1–14 is a signal peptide; sequence MISFALLLMTGVES. The LCN-type CS-alpha/beta domain maps to 16-78; that stretch reads RDAYIAKPEN…VPIRVPGKCH (63 aa). Intrachain disulfides connect C26–C77, C30–C50, C36–C60, and C40–C62. Position 79 (R79) is a propeptide, removed by a carboxypeptidase.

This sequence belongs to the long (4 C-C) scorpion toxin superfamily. Sodium channel inhibitor family. Alpha subfamily. As to expression, expressed by the venom gland.

The protein resides in the secreted. Functionally, binds to sodium channels (Nav) and inhibits the inactivation of the activated channels, thereby blocking neuronal transmission. This toxin is active against mammals. The sequence is that of Neurotoxin BmK-M9 from Olivierus martensii (Manchurian scorpion).